Consider the following 1335-residue polypeptide: Aldehyde oxidase 2 (1335 aa).

One can recognise a 2Fe-2S ferredoxin-type domain in the interval 8-95 (DVLVFFVNGR…GAAVTTVEGV (88 aa)). Residues cysteine 47, cysteine 52, cysteine 55, and cysteine 77 each coordinate [2Fe-2S] cluster. Glutamine 116 contributes to the Mo-molybdopterin binding site. [2Fe-2S] cluster-binding residues include cysteine 117, cysteine 120, cysteine 152, and cysteine 154. Cysteine 154 contributes to the Mo-molybdopterin binding site. An FAD-binding PCMH-type domain is found at 242 to 427 (FRGDRVTWVS…ESVHIPHSQK (186 aa)). Residues 270 to 277 (LVLGNTAL), alanine 351, serine 360, histidine 364, aspartate 373, and leucine 417 each bind FAD. Mo-molybdopterin contacts are provided by residues 821–822 (GF), 1103–1106 (ASVG), glutamine 1218, and leucine 1285. Catalysis depends on glutamate 1287, which acts as the Proton acceptor; for azaheterocycle hydroxylase activity.

It belongs to the xanthine dehydrogenase family. Homodimer. [2Fe-2S] cluster is required as a cofactor. Requires FAD as cofactor. Mo-molybdopterin serves as cofactor. Detected in kidney, Harderian gland and olfactory mucosa.

It is found in the cytoplasm. The enzyme catalyses an aldehyde + O2 + H2O = a carboxylate + H2O2 + H(+). Oxidase with broad substrate specificity, oxidizing aromatic azaheterocycles, such as phthalazine, as well as aldehydes, such as benzaldehyde and retinal. In Cavia porcellus (Guinea pig), this protein is Aldehyde oxidase 2 (AOX2).